Reading from the N-terminus, the 103-residue chain is Histone H4 (103 aa).

A compositionally biased stretch (gly residues) spans 1–14; that stretch reads MSGRGKGGKGLGKG. A disordered region spans residues 1–20; sequence MSGRGKGGKGLGKGGAKRHR. S2 bears the N-acetylserine mark. At K17 the chain carries N6-acetyllysine. Residues 17-21 mediate DNA binding; the sequence is KRHRK. An N6-methyllysine modification is found at K21.

This sequence belongs to the histone H4 family. In terms of assembly, the nucleosome is a histone octamer containing two molecules each of H2A, H2B, H3 and H4 assembled in one H3-H4 heterotetramer and two H2A-H2B heterodimers. The octamer wraps approximately 147 bp of DNA.

It localises to the nucleus. Its subcellular location is the chromosome. Core component of nucleosome. Nucleosomes wrap and compact DNA into chromatin, limiting DNA accessibility to the cellular machineries which require DNA as a template. Histones thereby play a central role in transcription regulation, DNA repair, DNA replication and chromosomal stability. DNA accessibility is regulated via a complex set of post-translational modifications of histones, also called histone code, and nucleosome remodeling. This Capsicum annuum (Capsicum pepper) protein is Histone H4.